The chain runs to 251 residues: Tryptophan synthase alpha chain (251 aa).

Active-site proton acceptor residues include Glu-36 and Asp-47.

It belongs to the TrpA family. Tetramer of two alpha and two beta chains.

It catalyses the reaction (1S,2R)-1-C-(indol-3-yl)glycerol 3-phosphate + L-serine = D-glyceraldehyde 3-phosphate + L-tryptophan + H2O. It participates in amino-acid biosynthesis; L-tryptophan biosynthesis; L-tryptophan from chorismate: step 5/5. Its function is as follows. The alpha subunit is responsible for the aldol cleavage of indoleglycerol phosphate to indole and glyceraldehyde 3-phosphate. The sequence is that of Tryptophan synthase alpha chain from Thermococcus kodakarensis (strain ATCC BAA-918 / JCM 12380 / KOD1) (Pyrococcus kodakaraensis (strain KOD1)).